Here is a 128-residue protein sequence, read N- to C-terminus: Large ribosomal subunit protein bL20 (128 aa).

The protein belongs to the bacterial ribosomal protein bL20 family.

Binds directly to 23S ribosomal RNA and is necessary for the in vitro assembly process of the 50S ribosomal subunit. It is not involved in the protein synthesizing functions of that subunit. This chain is Large ribosomal subunit protein bL20, found in Anaplasma marginale (strain Florida).